A 210-amino-acid chain; its full sequence is Large ribosomal subunit protein uL3 (210 aa).

A disordered region spans residues 125 to 151 (RHGQSRGPMSHGSRYHRRPGSMGPVAP).

This sequence belongs to the universal ribosomal protein uL3 family. In terms of assembly, part of the 50S ribosomal subunit. Forms a cluster with proteins L14 and L19.

Functionally, one of the primary rRNA binding proteins, it binds directly near the 3'-end of the 23S rRNA, where it nucleates assembly of the 50S subunit. The protein is Large ribosomal subunit protein uL3 of Bacillus mycoides (strain KBAB4) (Bacillus weihenstephanensis).